A 360-amino-acid polypeptide reads, in one-letter code: Inward rectifier potassium channel 13 (360 aa).

Over 1–50 (MDSSNCKVIAPLLSQRYRRMVTKDGHSTLQMDGAQRGLAYLRDAWGILMD) the chain is Cytoplasmic. The helical transmembrane segment at 51–77 (MRWRWMMLVFSASFVVHWLVFAVLWYV) threads the bilayer. Residues 78–105 (LAEMNGDLELDHDAPPENHTICVKYITS) lie on the Extracellular side of the membrane. Positions 106–122 (FTAAFSFSLETQLTIGY) form an intramembrane region, helical; Pore-forming. The Selectivity filter signature appears at 119-124 (TIGYGT). The Extracellular segment spans residues 123–131 (GTMFPSGDC). Residues 132 to 157 (PSAIALLAIQMLLGLMLEAFITGAFV) form a helical membrane-spanning segment. Residues 158–360 (AKIARPKNRA…FQISETGLTE (203 aa)) are Cytoplasmic-facing. At Ser-201 the chain carries Phosphoserine; by PKC. Ser-287 is modified (phosphoserine; by PKA).

Belongs to the inward rectifier-type potassium channel (TC 1.A.2.1) family. KCNJ13 subfamily. In terms of assembly, homotetramer. Interacts with RAB28; the interaction may facilitate cone outer segments phagocytosis. In terms of processing, phosphorylation at Ser-201 by PKC strongly inhibits ionic currents, while phosphorylation at Ser-287 by PKA increases them. Predominantly expressed in small intestine. Expression is also detected in stomach, kidney, and all central nervous system regions tested with the exception of spinal cord.

The protein localises to the membrane. The protein resides in the cell membrane. It catalyses the reaction K(+)(in) = K(+)(out). Its activity is regulated as follows. Inhibited by Ba(2+) and Cs(+), although sensitivity to those inhibitors is much lower than in other Kir channels. Its function is as follows. Inward rectifier potassium channels are characterized by a greater tendency to allow potassium to flow into the cell rather than out of it. Their voltage dependence is regulated by the concentration of extracellular potassium; as external potassium is raised, the voltage range of the channel opening shifts to more positive voltages. The inward rectification is mainly due to the blockage of outward current by internal magnesium. KCNJ13 has a very low single channel conductance, low sensitivity to block by external barium and cesium, and no dependence of its inward rectification properties on the internal blocking particle magnesium. This is Inward rectifier potassium channel 13 (KCNJ13) from Homo sapiens (Human).